A 117-amino-acid chain; its full sequence is Large ribosomal subunit protein bL20c (117 aa).

This sequence belongs to the bacterial ribosomal protein bL20 family.

The protein resides in the plastid. Its subcellular location is the chloroplast. Its function is as follows. Binds directly to 23S ribosomal RNA and is necessary for the in vitro assembly process of the 50S ribosomal subunit. It is not involved in the protein synthesizing functions of that subunit. This Buxus microphylla (Littleleaf boxwood) protein is Large ribosomal subunit protein bL20c.